A 218-amino-acid chain; its full sequence is Ribose-5-phosphate isomerase A (218 aa).

Substrate-binding positions include 28–31, 81–84, and 94–97; these read TGST, DGAD, and KGGG. Residue glutamate 103 is the Proton acceptor of the active site. Position 121 (lysine 121) interacts with substrate.

Belongs to the ribose 5-phosphate isomerase family. In terms of assembly, homodimer.

The catalysed reaction is aldehydo-D-ribose 5-phosphate = D-ribulose 5-phosphate. Its pathway is carbohydrate degradation; pentose phosphate pathway; D-ribose 5-phosphate from D-ribulose 5-phosphate (non-oxidative stage): step 1/1. Functionally, catalyzes the reversible conversion of ribose-5-phosphate to ribulose 5-phosphate. This Vibrio parahaemolyticus serotype O3:K6 (strain RIMD 2210633) protein is Ribose-5-phosphate isomerase A.